The sequence spans 163 residues: MEFDVTIEIPKGSRNKYEVDHETGRIRLDRRLFTSTAYPTDYGFVENTLGEDGDPLDALVILDEPTFPGCLIRCRAIGMFRMTDEAGGDDKLLCVPSTDPRVEHLRDIHHVSEFDRLEIQHFFEVYKDLEPGKSVEGADWVGRTEAEAEIERSYKRFKDQGGH.

Glutamate 8 lines the Mg(2+) pocket. Residues lysine 16, arginine 30, and tyrosine 42 each contribute to the substrate site. Residues aspartate 52, aspartate 57, aspartate 84, and aspartate 89 each contribute to the Mg(2+) site. The Proton acceptor role is filled by aspartate 89. A substrate-binding site is contributed by tyrosine 126.

The protein belongs to the PPase family. As to quaternary structure, homohexamer. Mg(2+) serves as cofactor.

It localises to the cytoplasm. It carries out the reaction diphosphate + H2O = 2 phosphate + H(+). Its function is as follows. Catalyzes the hydrolysis of inorganic pyrophosphate (PPi) forming two phosphate ions. The sequence is that of Inorganic pyrophosphatase from Streptomyces coelicolor (strain ATCC BAA-471 / A3(2) / M145).